Consider the following 210-residue polypeptide: Large ribosomal subunit protein uL4 (210 aa).

Residues 46–89 (QGTASTLTRSEVRGGGRKPYKQKGTGRARQGSIRTPLRPGGGII) are disordered. The segment covering 60–71 (GGRKPYKQKGTG) has biased composition (basic residues).

Belongs to the universal ribosomal protein uL4 family. As to quaternary structure, part of the 50S ribosomal subunit.

Functionally, one of the primary rRNA binding proteins, this protein initially binds near the 5'-end of the 23S rRNA. It is important during the early stages of 50S assembly. It makes multiple contacts with different domains of the 23S rRNA in the assembled 50S subunit and ribosome. Its function is as follows. Forms part of the polypeptide exit tunnel. The polypeptide is Large ribosomal subunit protein uL4 (Prochlorococcus marinus (strain MIT 9312)).